The following is a 122-amino-acid chain: MKVFLSGSIRGGRQMLPTYQFICRFLRNKGHEVLSWHVADSEVEGKESLLTETQIYERDMSFLQDSECMIAEVSMPSIGVGYEVCSAIKKGIPVMCVHMPDSNVSAMLLGNTYADISVRLWG.

Substrate contacts are provided by residues 4 to 10, Tyr-19, His-37, Glu-83, and 105 to 107; these read FLSGSIR and SAM.

The protein belongs to the 2'-deoxynucleoside 5'-phosphate N-hydrolase 1 family. In terms of assembly, monomer and homodimer.

The enzyme catalyses a pyrimidine 2'-deoxyribonucleoside 5'-phosphate + H2O = a pyrimidine nucleobase + 2-deoxy-D-ribose 5-phosphate. It carries out the reaction a purine 2'-deoxyribonucleoside 5'-phosphate + H2O = a purine nucleobase + 2-deoxy-D-ribose 5-phosphate. Functionally, catalyzes the cleavage of the N-glycosidic bond of deoxyribonucleoside 5'-monophosphates to yield deoxyribose 5-phosphate and a purine or pyrimidine base. The protein is Putative 2'-deoxynucleoside 5'-phosphate N-hydrolase 1 of Methanococcoides burtonii (strain DSM 6242 / NBRC 107633 / OCM 468 / ACE-M).